The chain runs to 245 residues: Uridylate kinase (245 aa).

Residue 15 to 18 (KLSG) participates in ATP binding. An involved in allosteric activation by GTP region spans residues 23 to 28 (GDEGFG). Gly-57 is a UMP binding site. Residues Gly-58 and Arg-62 each coordinate ATP. UMP contacts are provided by residues Asp-77 and 138–145 (TGNPFCTT). ATP is bound by residues Thr-165, Tyr-171, and Asp-174.

Belongs to the UMP kinase family. Homohexamer.

The protein localises to the cytoplasm. It catalyses the reaction UMP + ATP = UDP + ADP. The protein operates within pyrimidine metabolism; CTP biosynthesis via de novo pathway; UDP from UMP (UMPK route): step 1/1. Allosterically activated by GTP. Inhibited by UTP. Catalyzes the reversible phosphorylation of UMP to UDP. This chain is Uridylate kinase, found in Shewanella sp. (strain W3-18-1).